The chain runs to 873 residues: Bifunctional uridylyltransferase/uridylyl-removing enzyme (873 aa).

The interval 1-332 (MPYQCPITFN…NGGQTQEAEI (332 aa)) is uridylyltransferase. Residues 333-692 (LDNDFQRRGS…ISKKATRGGT (360 aa)) form a uridylyl-removing region. The HD domain maps to 451 to 573 (VDEHSIRLLK…VRDEESLELL (123 aa)). 2 consecutive ACT domains span residues 693–777 (EVFV…RTPR) and 800–873 (LMEL…ELAP).

Belongs to the GlnD family. Requires Mg(2+) as cofactor.

The catalysed reaction is [protein-PII]-L-tyrosine + UTP = [protein-PII]-uridylyl-L-tyrosine + diphosphate. It catalyses the reaction [protein-PII]-uridylyl-L-tyrosine + H2O = [protein-PII]-L-tyrosine + UMP + H(+). Uridylyltransferase (UTase) activity is inhibited by glutamine, while glutamine activates uridylyl-removing (UR) activity. In terms of biological role, modifies, by uridylylation and deuridylylation, the PII regulatory proteins (GlnB and homologs), in response to the nitrogen status of the cell that GlnD senses through the glutamine level. Under low glutamine levels, catalyzes the conversion of the PII proteins and UTP to PII-UMP and PPi, while under higher glutamine levels, GlnD hydrolyzes PII-UMP to PII and UMP (deuridylylation). Thus, controls uridylylation state and activity of the PII proteins, and plays an important role in the regulation of nitrogen assimilation and metabolism. The protein is Bifunctional uridylyltransferase/uridylyl-removing enzyme of Vibrio atlanticus (strain LGP32) (Vibrio splendidus (strain Mel32)).